The sequence spans 58 residues: uncharacterized protein (58 aa).

4Fe-4S ferredoxin-type domains are found at residues 2 to 27 and 28 to 57; these read GIKI…IKTY and GVAI…VDTS. [4Fe-4S] cluster contacts are provided by C9, C12, C15, C19, C37, C40, C43, and C47.

[4Fe-4S] cluster is required as a cofactor.

Ferredoxins are iron-sulfur proteins that transfer electrons probably in the CO-dehydrogenase complex. This is an uncharacterized protein from Methanocaldococcus jannaschii (strain ATCC 43067 / DSM 2661 / JAL-1 / JCM 10045 / NBRC 100440) (Methanococcus jannaschii).